The primary structure comprises 201 residues: Heat shock protein beta-1 (201 aa).

Omega-N-methylarginine is present on Arg12. A Phosphoserine; by MAPKAPK2 and MAPKAPK3 modification is found at Ser15. Phosphoserine is present on Ser27. The interaction with TGFB1I1 stretch occupies residues 68–201; it reads AYNRALSRQL…AGKSEQPENK (134 aa). A sHSP domain is found at 72-180; the sequence is ALSRQLSSGV…QSAEITIPVT (109 aa). Phosphoserine; by MAPKAPK2, MAPKAPK3 and MAPKAPK5 is present on residues Ser74 and Ser78. A phosphoserine mark is found at Ser79, Ser82, and Ser94. Lys119 carries the post-translational modification N6-acetyllysine. A Phosphothreonine modification is found at Thr170. Phosphoserine occurs at positions 172 and 195.

The protein belongs to the small heat shock protein (HSP20) family. As to quaternary structure, homooligomer. Homodimer; becomes monomeric upon activation. Heterooligomer; with HSPB6. Associates with alpha- and beta-tubulin. Interacts with TGFB1I1. Interacts with CRYAB. Interacts with HSPB8. Interacts with HSPBAP1. In terms of processing, phosphorylated upon exposure to protein kinase C activators and heat shock. Phosphorylation by MAPKAPK2 and MAPKAPK3 in response to stress dissociates HSPB1 from large small heat-shock protein (sHsps) oligomers and impairs its chaperone activity and ability to protect against oxidative stress effectively. Phosphorylation by MAPKAPK5 in response to PKA stimulation induces F-actin rearrangement.

It localises to the cytoplasm. The protein resides in the nucleus. It is found in the cytoskeleton. Its subcellular location is the spindle. In terms of biological role, small heat shock protein which functions as a molecular chaperone probably maintaining denatured proteins in a folding-competent state. Plays a role in stress resistance and actin organization. Through its molecular chaperone activity may regulate numerous biological processes including the phosphorylation and the axonal transport of neurofilament proteins. This chain is Heat shock protein beta-1 (HSPB1), found in Bos taurus (Bovine).